The following is a 379-amino-acid chain: MPGVAKRKYVGETMRINKNLSQVLRRLSDVLPYNYNAETLLELFQQLYPHEWRELNQRFDQYKEKDEFLLKKGKKIRYKPNPPKEHFFKLPIVKNILSKGRIAKHNANFDELAYQERFAKFKAKRENAIRSRNEKIAKANELIQNVEPLFIDTFIAAYHKRGISFDEKMEIFKELQKYKSKKTAEFFYKLSESERNNQIRNMAFKHLQVTGNYVKLRKNFNGKKKEYMTESSEFFMTPLDLLKRIESNNVQNKKVYDVFISHSYKDSSVIKKIIKAFNKLSISIYCDWTSDSDFLKRELVSEYTKVVLKKRIEQSKNIVFVKTDNSLESHWVRFELDYSRELGKTLFCINLSDEAEGECNVLQFDVKNETISWTTGLVK.

Residues 254 to 379 (KVYDVFISHS…TISWTTGLVK (126 aa)) enclose the TIR domain. Glu335 is a catalytic residue.

In terms of assembly, homodimer.

Its subcellular location is the cytoplasm. With respect to regulation, activated upon phage infection. One of 2 TIR-like protein components of the Thoeris antiviral defense system, composed of ThsA, TIR1 (thsB1) and TIR2 (thsB2). Phage infection activates this protein; by 70 minutes post-infection with phage SPO1, TIR2 generates a signal molecule that in turn activates the NAD(+) hydrolase activity of ThsA (tested with B.cereus). The signal is similar to cyclic ADP-D-ribose, but how it differs is unknown. Expression of Thoeris in B.subtilis (strain BEST7003) confers resistance to phages phi29, phi3T, SPBeta, SBSphi11, SBSphi13, SBSphiJ, SPO1 and SPR but not SBSphiC. The TIR paralogs confer resistance to different phages; this subunit confers resistance to phi3T, SPBeta, SBSphi13, SBSphiJ, SPO1 and SPR but not phi29, SBSphi11 or SBSphiC. There is overlap in the phage range for this system, both TIR1 and TIR2 are activated by SBSphi13, SBSphiJ, SPO1 and SPR. Probably hydrolyzes NAD(+) to make a cyclic ADP-D-ribose (cADPR) signaling molecule; might make 3'cADPR. The chain is Putative cyclic ADP-D-ribose synthase TIR2 from Cytobacillus dafuensis (Bacillus dafuensis).